A 597-amino-acid polypeptide reads, in one-letter code: Elongation factor 4 (597 aa).

The 183-residue stretch at 2 to 184 (DHIRNFSIIA…ALIAKVPPPK (183 aa)) folds into the tr-type G domain. GTP contacts are provided by residues 14–19 (DHGKST) and 131–134 (NKID).

It belongs to the TRAFAC class translation factor GTPase superfamily. Classic translation factor GTPase family. LepA subfamily.

Its subcellular location is the cell inner membrane. The catalysed reaction is GTP + H2O = GDP + phosphate + H(+). Functionally, required for accurate and efficient protein synthesis under certain stress conditions. May act as a fidelity factor of the translation reaction, by catalyzing a one-codon backward translocation of tRNAs on improperly translocated ribosomes. Back-translocation proceeds from a post-translocation (POST) complex to a pre-translocation (PRE) complex, thus giving elongation factor G a second chance to translocate the tRNAs correctly. Binds to ribosomes in a GTP-dependent manner. The polypeptide is Elongation factor 4 (Cupriavidus pinatubonensis (strain JMP 134 / LMG 1197) (Cupriavidus necator (strain JMP 134))).